The primary structure comprises 132 residues: Small ribosomal subunit protein uS8 (132 aa).

This sequence belongs to the universal ribosomal protein uS8 family. Part of the 30S ribosomal subunit. Contacts proteins S5 and S12.

Functionally, one of the primary rRNA binding proteins, it binds directly to 16S rRNA central domain where it helps coordinate assembly of the platform of the 30S subunit. This Brevibacillus brevis (strain 47 / JCM 6285 / NBRC 100599) protein is Small ribosomal subunit protein uS8.